The primary structure comprises 338 residues: Ketol-acid reductoisomerase (NADP(+)) (338 aa).

Residues 1-181 (MKVYYDKDAD…GGTKGGVIET (181 aa)) enclose the KARI N-terminal Rossmann domain. Residues 24–27 (YGSQ), Arg-47, and Ser-52 contribute to the NADP(+) site. His-107 is an active-site residue. Gly-133 provides a ligand contact to NADP(+). Residues 182-327 (NFKEETETDL…GQLRDMMPWI (146 aa)) enclose the KARI C-terminal knotted domain. Residues Asp-190, Glu-194, Glu-226, and Glu-230 each contribute to the Mg(2+) site. Position 251 (Ser-251) interacts with substrate.

Belongs to the ketol-acid reductoisomerase family. The cofactor is Mg(2+).

It catalyses the reaction (2R)-2,3-dihydroxy-3-methylbutanoate + NADP(+) = (2S)-2-acetolactate + NADPH + H(+). The catalysed reaction is (2R,3R)-2,3-dihydroxy-3-methylpentanoate + NADP(+) = (S)-2-ethyl-2-hydroxy-3-oxobutanoate + NADPH + H(+). It functions in the pathway amino-acid biosynthesis; L-isoleucine biosynthesis; L-isoleucine from 2-oxobutanoate: step 2/4. Its pathway is amino-acid biosynthesis; L-valine biosynthesis; L-valine from pyruvate: step 2/4. In terms of biological role, involved in the biosynthesis of branched-chain amino acids (BCAA). Catalyzes an alkyl-migration followed by a ketol-acid reduction of (S)-2-acetolactate (S2AL) to yield (R)-2,3-dihydroxy-isovalerate. In the isomerase reaction, S2AL is rearranged via a Mg-dependent methyl migration to produce 3-hydroxy-3-methyl-2-ketobutyrate (HMKB). In the reductase reaction, this 2-ketoacid undergoes a metal-dependent reduction by NADPH to yield (R)-2,3-dihydroxy-isovalerate. This chain is Ketol-acid reductoisomerase (NADP(+)), found in Azoarcus sp. (strain BH72).